Reading from the N-terminus, the 255-residue chain is Acetylglutamate kinase (255 aa).

Substrate is bound by residues 40–41 (GG), arginine 62, and asparagine 157.

The protein belongs to the acetylglutamate kinase family. ArgB subfamily.

It localises to the cytoplasm. The catalysed reaction is N-acetyl-L-glutamate + ATP = N-acetyl-L-glutamyl 5-phosphate + ADP. It participates in amino-acid biosynthesis; L-arginine biosynthesis; N(2)-acetyl-L-ornithine from L-glutamate: step 2/4. Its function is as follows. Catalyzes the ATP-dependent phosphorylation of N-acetyl-L-glutamate. The chain is Acetylglutamate kinase from Parabacteroides distasonis (strain ATCC 8503 / DSM 20701 / CIP 104284 / JCM 5825 / NCTC 11152).